The following is a 186-amino-acid chain: Peptide deformylase (186 aa).

Residues Cys113 and His156 each coordinate Fe cation. The active site involves Glu157. His160 contacts Fe cation.

This sequence belongs to the polypeptide deformylase family. Fe(2+) is required as a cofactor.

The enzyme catalyses N-terminal N-formyl-L-methionyl-[peptide] + H2O = N-terminal L-methionyl-[peptide] + formate. Removes the formyl group from the N-terminal Met of newly synthesized proteins. Requires at least a dipeptide for an efficient rate of reaction. N-terminal L-methionine is a prerequisite for activity but the enzyme has broad specificity at other positions. The sequence is that of Peptide deformylase from Levilactobacillus brevis (strain ATCC 367 / BCRC 12310 / CIP 105137 / JCM 1170 / LMG 11437 / NCIMB 947 / NCTC 947) (Lactobacillus brevis).